The following is a 513-amino-acid chain: L-arabinose transport ATP-binding protein AraG (513 aa).

2 ABC transporter domains span residues 6–243 (LEMR…GMVG) and 264–508 (VKNW…TKTA). 38–45 (GENGAGKS) is an ATP binding site.

The protein belongs to the ABC transporter superfamily.

The protein localises to the cell membrane. It catalyses the reaction L-arabinose(out) + ATP + H2O = L-arabinose(in) + ADP + phosphate + H(+). Part of the binding-protein-dependent transport system for L-arabinose. Probably responsible for energy coupling to the transport system. This chain is L-arabinose transport ATP-binding protein AraG (araG), found in Geobacillus stearothermophilus (Bacillus stearothermophilus).